Here is a 680-residue protein sequence, read N- to C-terminus: DNA-directed RNA polymerase subunit beta' (680 aa).

Zn(2+)-binding residues include Cys-69, Cys-71, Cys-87, and Cys-90. 3 residues coordinate Mg(2+): Asp-489, Asp-491, and Asp-493.

Belongs to the RNA polymerase beta' chain family. RpoC1 subfamily. As to quaternary structure, in plastids the minimal PEP RNA polymerase catalytic core is composed of four subunits: alpha, beta, beta', and beta''. When a (nuclear-encoded) sigma factor is associated with the core the holoenzyme is formed, which can initiate transcription. The cofactor is Mg(2+). Zn(2+) serves as cofactor.

It localises to the plastid. Its subcellular location is the chloroplast. The catalysed reaction is RNA(n) + a ribonucleoside 5'-triphosphate = RNA(n+1) + diphosphate. In terms of biological role, DNA-dependent RNA polymerase catalyzes the transcription of DNA into RNA using the four ribonucleoside triphosphates as substrates. The chain is DNA-directed RNA polymerase subunit beta' from Ranunculus macranthus (Large buttercup).